The chain runs to 73 residues: Protein SlyX homolog (73 aa).

The protein belongs to the SlyX family.

This chain is Protein SlyX homolog, found in Histophilus somni (strain 129Pt) (Haemophilus somnus).